The following is a 308-amino-acid chain: Dual oxidase maturation factor 1 (308 aa).

Topologically, residues 1–21 (MQANIFPFYPQPRTPFKFDTK) are extracellular. A helical transmembrane segment spans residues 22–42 (IIEIIIICIVTACTFIIILPG). The Cytoplasmic portion of the chain corresponds to 43–49 (IRGKSRS). A helical membrane pass occupies residues 50–70 (IWLLRILTSLFIGAVILAVNF). Residues 71 to 91 (TSDWEMGTITATTVYKSFSHS) lie on the Extracellular side of the membrane. A helical transmembrane segment spans residues 92–112 (MLNASIGLWIGLKGLNITLIG). Over 113–175 (NPEYQLNETI…GLFQQYCIST (63 aa)) the chain is Cytoplasmic. Residues 176-198 (YYSSGIMWIAFCSWILYNVLFSM) traverse the membrane as a helical segment. Position 199 (P199) is a topological domain, extracellular. The helical transmembrane segment at 200–220 (VILYGIYMMFVTAICMLVSLI) threads the bilayer. Over 221 to 247 (SFASVRKAPVCNIQFGNSILKTHFGVS) the chain is Cytoplasmic. Residues 248 to 268 (YWLSLITGLLCLIISLVLLFL) form a helical membrane-spanning segment. At 269-308 (YKTQPKVLQLIFSYGEEEDLSNKSENEEEHSSVLSLNEIL) the chain is on the extracellular side. N-linked (GlcNAc...) asparagine glycosylation is present at N290.

This sequence belongs to the DUOXA family.

Its subcellular location is the membrane. Functionally, possible role in maturation and transport from the endoplasmic reticulum to the plasma membrane of functional dual oxidase. This chain is Dual oxidase maturation factor 1 (duoxa1), found in Xenopus laevis (African clawed frog).